We begin with the raw amino-acid sequence, 555 residues long: Dihydroxy-acid dehydratase (555 aa).

Asp78 is a binding site for Mg(2+). Cys119 is a binding site for [2Fe-2S] cluster. Mg(2+)-binding residues include Asp120 and Lys121. Lys121 carries the post-translational modification N6-carboxylysine. Position 192 (Cys192) interacts with [2Fe-2S] cluster. Glu444 contributes to the Mg(2+) binding site. Residue Ser470 is the Proton acceptor of the active site.

It belongs to the IlvD/Edd family. As to quaternary structure, homodimer. It depends on [2Fe-2S] cluster as a cofactor. Mg(2+) serves as cofactor.

The catalysed reaction is (2R)-2,3-dihydroxy-3-methylbutanoate = 3-methyl-2-oxobutanoate + H2O. The enzyme catalyses (2R,3R)-2,3-dihydroxy-3-methylpentanoate = (S)-3-methyl-2-oxopentanoate + H2O. It participates in amino-acid biosynthesis; L-isoleucine biosynthesis; L-isoleucine from 2-oxobutanoate: step 3/4. The protein operates within amino-acid biosynthesis; L-valine biosynthesis; L-valine from pyruvate: step 3/4. Its function is as follows. Functions in the biosynthesis of branched-chain amino acids. Catalyzes the dehydration of (2R,3R)-2,3-dihydroxy-3-methylpentanoate (2,3-dihydroxy-3-methylvalerate) into 2-oxo-3-methylpentanoate (2-oxo-3-methylvalerate) and of (2R)-2,3-dihydroxy-3-methylbutanoate (2,3-dihydroxyisovalerate) into 2-oxo-3-methylbutanoate (2-oxoisovalerate), the penultimate precursor to L-isoleucine and L-valine, respectively. The protein is Dihydroxy-acid dehydratase of Halalkalibacterium halodurans (strain ATCC BAA-125 / DSM 18197 / FERM 7344 / JCM 9153 / C-125) (Bacillus halodurans).